The primary structure comprises 426 residues: Glutamate-1-semialdehyde 2,1-aminomutase (426 aa).

Lys265 is modified (N6-(pyridoxal phosphate)lysine).

The protein belongs to the class-III pyridoxal-phosphate-dependent aminotransferase family. HemL subfamily. In terms of assembly, homodimer. It depends on pyridoxal 5'-phosphate as a cofactor.

The protein resides in the cytoplasm. The enzyme catalyses (S)-4-amino-5-oxopentanoate = 5-aminolevulinate. Its pathway is porphyrin-containing compound metabolism; protoporphyrin-IX biosynthesis; 5-aminolevulinate from L-glutamyl-tRNA(Glu): step 2/2. The polypeptide is Glutamate-1-semialdehyde 2,1-aminomutase (Sodalis glossinidius (strain morsitans)).